A 553-amino-acid polypeptide reads, in one-letter code: Membrane protein insertase YidC (553 aa).

Residues 6–26 (LIALVLSLLVLVFWEMYFGLF) form a helical membrane-spanning segment. Residues 34–59 (NKTEQAAPTTTQPATPQTVPPQAATP) form a disordered region. Low complexity predominate over residues 38–59 (QAAPTTTQPATPQTVPPQAATP). 5 consecutive transmembrane segments (helical) span residues 331–351 (LASA…VYVL), 360–380 (NWGV…WPLT), 424–444 (VNPM…FALY), 477–497 (IPYL…MFIQ), and 512–532 (IMMI…SGLV).

The protein belongs to the OXA1/ALB3/YidC family. Type 1 subfamily. As to quaternary structure, interacts with the Sec translocase complex via SecD. Specifically interacts with transmembrane segments of nascent integral membrane proteins during membrane integration.

The protein localises to the cell inner membrane. Its function is as follows. Required for the insertion and/or proper folding and/or complex formation of integral membrane proteins into the membrane. Involved in integration of membrane proteins that insert both dependently and independently of the Sec translocase complex, as well as at least some lipoproteins. Aids folding of multispanning membrane proteins. In Syntrophobacter fumaroxidans (strain DSM 10017 / MPOB), this protein is Membrane protein insertase YidC.